The chain runs to 154 residues: Large-conductance mechanosensitive channel (154 aa).

Helical transmembrane passes span 12 to 32 (GNIV…ALIT) and 71 to 91 (IVLS…FLVV). Residues 129–154 (NGAPSGRHVDTADLTPTPNHEPRADT) form a disordered region.

This sequence belongs to the MscL family. Homopentamer.

The protein localises to the cell membrane. Its function is as follows. Channel that opens in response to stretch forces in the membrane lipid bilayer. May participate in the regulation of osmotic pressure changes within the cell. The sequence is that of Large-conductance mechanosensitive channel from Mycobacterium leprae (strain Br4923).